A 499-amino-acid polypeptide reads, in one-letter code: MNMLRCFPECGICGQEYSEDEKLLIPRILTECGHTICTGCAGKIKGQSSIIACPFDRIETRIWKKDVTRLKKNFSILEIKQEVKDRKNRVISEKNEKKERNKNGVCDENTNHHASNYCETCDADLCEECWTWIHSISTLAHHEKKMISTPDCQFHPGKSISLVCMRDRCKKRQNRLMCSECFLDKCSDHFEHEHSSLHLELPELRRNICSSLALYHEKEKKILANIGKLREIIATYSYDGEPFFQKKNELLRFRHFEMGEMDQAIKVLENEVVKRVRVLEYKISNQKLDLDWLQKNKDAIVKLSALPNMKLVQRKWELEVTVKRIEKDSAVRRPEFLADCSTCIVHVLSQRPLQIEMIPAFRLEIRECHRNEVRKFIENHSTRISSRSNILRYNCDFLEIIDRTEDLTIYSEGLRLIMIVDLLDGDRDRYFVALEQLEEAVAYEKIIVGLKSYSRGHGEAASNFLTKLADLHNKMPKITVVVNVDRSEDIEKIVNESII.

Residues 10 to 57 (CGICGQEYSEDEKLLIPRILTECGHTICTGCAGKIKGQSSIIACPFDR) form an RING-type; degenerate zinc finger. The B box-type; degenerate zinc-finger motif lies at 101 to 147 (NKNGVCDENTNHHASNYCETCDADLCEECWTWIHSISTLAHHEKKMI).

This is an uncharacterized protein from Caenorhabditis elegans.